A 76-amino-acid chain; its full sequence is Protein TraJ (76 aa).

It is found in the cytoplasm. Its function is as follows. This protein is essential for positively regulating the expression of transfer genes that are involved in the conjugal transfer of DNA between bacterial cells. The sequence is that of Protein TraJ (traJ) from Escherichia coli.